A 188-amino-acid chain; its full sequence is Glutathione S-transferase 2 (188 aa).

Residues 2 to 79 (VHYKLMCFDV…FLARQYGYSG (78 aa)) form the GST N-terminal domain. Residues Lys43, 49 to 51 (GQL), and 63 to 64 (QS) each bind glutathione. Positions 81-188 (TPTEEMQVDS…PHLNVFIRKL (108 aa)) constitute a GST C-terminal domain.

Belongs to the GST superfamily. Sigma family.

The catalysed reaction is RX + glutathione = an S-substituted glutathione + a halide anion + H(+). Functionally, conjugation of reduced glutathione to a wide number of exogenous and endogenous hydrophobic electrophiles. This Caenorhabditis elegans protein is Glutathione S-transferase 2 (gst-2).